The chain runs to 132 residues: Small ribosomal subunit protein uS8 (132 aa).

The protein belongs to the universal ribosomal protein uS8 family. Part of the 30S ribosomal subunit. Contacts proteins S5 and S12.

Functionally, one of the primary rRNA binding proteins, it binds directly to 16S rRNA central domain where it helps coordinate assembly of the platform of the 30S subunit. This Xylella fastidiosa (strain M12) protein is Small ribosomal subunit protein uS8.